A 312-amino-acid chain; its full sequence is Apolipoprotein E (312 aa).

The signal sequence occupies residues 1–18 (MKALWALLLVPLLTGCLA). 8 repeat units span residues 72-93 (VLME…EQLG), 94-115 (PVAE…ARLG), 116-137 (ADME…TMLG), 138-159 (QSTE…KRLM), 160-181 (RDAD…EGAE), 182-203 (RGVS…QRTA), 204-225 (NLGS…DRIR), and 226-247 (GRLE…DQME). An 8 X 22 AA approximate tandem repeats region spans residues 72–247 (VLMEDTMTEV…RLEEVRDQME (176 aa)). The residue at position 135 (M135) is a Methionine sulfoxide. S139 carries the phosphoserine modification. The LDL and other lipoprotein receptors binding stretch occupies residues 150–160 (HLRKMRKRLMR). An LDL receptor binding region spans residues 150–160 (HLRKMRKRLMR). 154 to 157 (MRKR) provides a ligand contact to heparin. A lipid-binding and lipoprotein association region spans residues 202–282 (TANLGSGAAQ…GWFEPLVEDM (81 aa)). 221 to 228 (SDRIRGRL) lines the heparin pocket. A homooligomerization region spans residues 258-312 (QQIRLQAEVFQARLKGWFEPLVEDMQRQWANLMEKIQASVATNSIASTTVPLENQ). The interval 270–282 (RLKGWFEPLVEDM) is specificity for association with VLDL.

The protein belongs to the apolipoprotein A1/A4/E family. Homotetramer. May interact with ABCA1; functionally associated with ABCA1 in the biogenesis of HDLs. May interact with APP/A4 amyloid-beta peptide; the interaction is extremely stable in vitro but its physiological significance is unclear. May interact with MAPT. May interact with MAP2. In the cerebrospinal fluid, interacts with secreted SORL1. Interacts with PMEL; this allows the loading of PMEL luminal fragment on ILVs to induce fibril nucleation. Post-translationally, APOE exists as multiple glycosylated and sialylated glycoforms within cells and in plasma. The extent of glycosylation and sialylation are tissue and context specific. Glycated in plasma VLDL. In terms of processing, phosphorylated by FAM20C in the extracellular medium.

It localises to the secreted. The protein localises to the extracellular space. It is found in the extracellular matrix. The protein resides in the extracellular vesicle. Its subcellular location is the endosome. It localises to the multivesicular body. Functionally, APOE is an apolipoprotein, a protein associating with lipid particles, that mainly functions in lipoprotein-mediated lipid transport between organs via the plasma and interstitial fluids. APOE is a core component of plasma lipoproteins and is involved in their production, conversion and clearance. Apolipoproteins are amphipathic molecules that interact both with lipids of the lipoprotein particle core and the aqueous environment of the plasma. As such, APOE associates with chylomicrons, chylomicron remnants, very low density lipoproteins (VLDL) and intermediate density lipoproteins (IDL) but shows a preferential binding to high-density lipoproteins (HDL). It also binds a wide range of cellular receptors including the LDL receptor/LDLR, the LDL receptor-related proteins LRP1, LRP2 and LRP8 and the very low-density lipoprotein receptor/VLDLR that mediate the cellular uptake of the APOE-containing lipoprotein particles. Finally, APOE also has a heparin-binding activity and binds heparan-sulfate proteoglycans on the surface of cells, a property that supports the capture and the receptor-mediated uptake of APOE-containing lipoproteins by cells. A main function of APOE is to mediate lipoprotein clearance through the uptake of chylomicrons, VLDLs, and HDLs by hepatocytes. APOE is also involved in the biosynthesis by the liver of VLDLs as well as their uptake by peripheral tissues ensuring the delivery of triglycerides and energy storage in muscle, heart and adipose tissues. By participating in the lipoprotein-mediated distribution of lipids among tissues, APOE plays a critical role in plasma and tissues lipid homeostasis. APOE is also involved in two steps of reverse cholesterol transport, the HDLs-mediated transport of cholesterol from peripheral tissues to the liver, and thereby plays an important role in cholesterol homeostasis. First, it is functionally associated with ABCA1 in the biogenesis of HDLs in tissues. Second, it is enriched in circulating HDLs and mediates their uptake by hepatocytes. APOE also plays an important role in lipid transport in the central nervous system, regulating neuron survival and sprouting. The protein is Apolipoprotein E (Apoe) of Rattus rattus (Black rat).